A 347-amino-acid polypeptide reads, in one-letter code: Transcription termination/antitermination protein NusA (347 aa).

The region spanning 112–184 is the S1 motif domain; that stretch reads GEIVAGVIQR…REPLITLSRT (73 aa). A KH domain is found at 287 to 347; the sequence is ARAARVVVPD…GVSRGMAHDR (61 aa). The disordered stretch occupies residues 322–347; sequence DIRGDAPPPPPGQPEPGVSRGMAHDR.

It belongs to the NusA family. In terms of assembly, monomer. Binds directly to the core enzyme of the DNA-dependent RNA polymerase and to nascent RNA.

It is found in the cytoplasm. In terms of biological role, participates in both transcription termination and antitermination. This is Transcription termination/antitermination protein NusA from Mycobacterium bovis (strain ATCC BAA-935 / AF2122/97).